Reading from the N-terminus, the 585-residue chain is Switch-associated protein 70 (585 aa).

Positions 210–306 constitute a PH domain; that stretch reads DVLKQGYMMK…WIQAIYSTIH (97 aa). Residues 316 to 529 adopt a coiled-coil conformation; it reads HKEARQRRKE…VKKKLEMATH (214 aa). The tract at residues 347-373 is disordered; sequence ANENKQQELESVRKKLEEAASRAADEE. Basic and acidic residues predominate over residues 351–373; the sequence is KQQELESVRKKLEEAASRAADEE.

In terms of assembly, the SWAP complex consists of NPM1, NCL, PARP1 and SWAP70. Tyrosine-phosphorylated. As to expression, spleen. Expressed only in B-cells that have been induced to switch to various Ig isotypes.

Its subcellular location is the cytoplasm. The protein resides in the cell membrane. The protein localises to the nucleus. It is found in the cell projection. It localises to the lamellipodium. Its subcellular location is the cytoskeleton. Its function is as follows. Phosphatidylinositol 3,4,5-trisphosphate-dependent guanine nucleotide exchange factor (GEF) which, independently of RAS, transduces signals from tyrosine kinase receptors to RAC. It also mediates signaling of membrane ruffling. Regulates the actin cytoskeleton as an effector or adapter protein in response to agonist stimulated phosphatidylinositol (3,4)-bisphosphate production and cell protrusion. The polypeptide is Switch-associated protein 70 (Swap70) (Mus musculus (Mouse)).